The sequence spans 341 residues: Delta(1)-pyrroline-2-carboxylate/Delta(1)-piperideine-2-carboxylate reductase (341 aa).

The active-site Charge relay system is S52. H53 functions as the Proton donor in the catalytic mechanism. Position 57 (R57) interacts with substrate. Position 125-129 (125-129) interacts with NADP(+); the sequence is HFAAL. A substrate-binding site is contributed by T165. Residue 183-185 participates in NADP(+) binding; the sequence is DMA. Residue 191–192 participates in substrate binding; it reads HG. D193 functions as the Charge relay system in the catalytic mechanism. Residues 235–236 and 308–314 each bind NADP(+); these read HK and RMPGERR.

The protein belongs to the LDH2/MDH2 oxidoreductase family. Homodimer.

The enzyme catalyses L-pipecolate + NADP(+) = Delta(1)-piperideine-2-carboxylate + NADPH + H(+). It catalyses the reaction L-proline + NADP(+) = 1-pyrroline-2-carboxylate + NADPH + H(+). The catalysed reaction is N-methyl-L-alanine + NADP(+) + H2O = methylamine + pyruvate + NADPH + H(+). Is inhibited by the substrate analog pyrrole-2-carboxylate, but not by N-formylphenylalanine. Functionally, catalyzes the reduction of both Delta(1)-pyrroline-2-carboxylate (Pyr2C) and Delta(1)-piperideine-2-carboxylate (Pip2C) to L-proline and L-pipecolate, respectively, using NADPH as the electron donor. Can use NADH instead of NADPH, although with much less efficiency. Plays an essential role in the catabolism of D-proline and D-lysine, which allows P.putida to grow on each of these amino-acids as a sole carbon source; D-lysine appears to be catabolized only through the pipecolate pathway. Can also catalyze the reverse oxidation reactions, albeit at a much lower rate. To a lesser extent, is able to catalyze in vitro the NADPH-dependent formation of N-alkyl-L-amino acids from the corresponding alpha-oxo acids and alkylamines, e.g. the formation of N-methylalanine from pyruvate and N-methylamine; cannot use ammonia as substrate for these reductive amination reactions. Shows neither malate dehydrogenase nor lactate dehydrogenase activity. This is Delta(1)-pyrroline-2-carboxylate/Delta(1)-piperideine-2-carboxylate reductase from Pseudomonas putida (Arthrobacter siderocapsulatus).